Here is a 143-residue protein sequence, read N- to C-terminus: Ponticulin (143 aa).

The first 22 residues, 1 to 22 (MLVLRNLLALVTLALLFTLSSA), serve as a signal peptide directing secretion. Asn-111 is a glycosylation site (N-linked (GlcNAc...) asparagine). A lipid anchor (GPI-like-anchor amidated serine) is attached at Ser-118. A propeptide spans 119–143 (SSGSTVMIGLASSLLFAFATLLALF) (removed in mature form).

This sequence belongs to the ponticulin family. As to quaternary structure, monomer. Disulfide bond(s) stabilize the native, actin-binding conformation of ponticulin. Post-translationally, the GPI-like-anchor contains a phosphoceramide group, rather than a phosphatidyl group.

The protein localises to the cell membrane. Functionally, binds F-actin and nucleates actin assembly. Major high affinity link between the plasma membrane and the cortical actin network. The sequence is that of Ponticulin (ponA) from Dictyostelium discoideum (Social amoeba).